The chain runs to 106 residues: Large ribosomal subunit protein bL21 (106 aa).

This sequence belongs to the bacterial ribosomal protein bL21 family. Part of the 50S ribosomal subunit. Contacts protein L20.

Functionally, this protein binds to 23S rRNA in the presence of protein L20. The protein is Large ribosomal subunit protein bL21 of Fervidobacterium nodosum (strain ATCC 35602 / DSM 5306 / Rt17-B1).